The primary structure comprises 314 residues: Ornithine carbamoyltransferase (314 aa).

Residues 58–61, Gln-85, Arg-109, and 136–139 each bind carbamoyl phosphate; these read STRT and HPLQ. Residues Asn-168, Asp-232, and 236 to 237 contribute to the L-ornithine site; that span reads SM. Carbamoyl phosphate-binding positions include 272 to 273 and Arg-300; that span reads CL.

The protein belongs to the aspartate/ornithine carbamoyltransferase superfamily. OTCase family.

It is found in the cytoplasm. It catalyses the reaction carbamoyl phosphate + L-ornithine = L-citrulline + phosphate + H(+). Its pathway is amino-acid biosynthesis; L-arginine biosynthesis; L-arginine from L-ornithine and carbamoyl phosphate: step 1/3. Its function is as follows. Reversibly catalyzes the transfer of the carbamoyl group from carbamoyl phosphate (CP) to the N(epsilon) atom of ornithine (ORN) to produce L-citrulline. The chain is Ornithine carbamoyltransferase from Hyperthermus butylicus (strain DSM 5456 / JCM 9403 / PLM1-5).